A 130-amino-acid polypeptide reads, in one-letter code: MSMQDPIADMLTRIRNGQAANKVAVTMPSSKLKVAIANVLKEEGYIEDFKIEGDTKPELEITLKYFQGKAVVESIQRVSRPSLRIYKRKDELPQVMAGLGIAVVSTSKGVMTDRAARQAGLGGEIICYVA.

Belongs to the universal ribosomal protein uS8 family. In terms of assembly, part of the 30S ribosomal subunit. Contacts proteins S5 and S12.

In terms of biological role, one of the primary rRNA binding proteins, it binds directly to 16S rRNA central domain where it helps coordinate assembly of the platform of the 30S subunit. This chain is Small ribosomal subunit protein uS8, found in Proteus mirabilis (strain HI4320).